We begin with the raw amino-acid sequence, 355 residues long: Hyaluronan and proteoglycan link protein 1 (355 aa).

A propeptide spanning residues 1–9 is cleaved from the precursor; the sequence is MTSLLFLVL. Asparagine 21 and asparagine 56 each carry an N-linked (GlcNAc...) asparagine glycan. In terms of domain architecture, Ig-like V-type spans 38–156; that stretch reads PRLLVVAEQA…EDDTAVVALN (119 aa). Cystine bridges form between cysteine 61–cysteine 140, cysteine 182–cysteine 253, cysteine 206–cysteine 227, cysteine 280–cysteine 350, and cysteine 305–cysteine 326. 2 Link domains span residues 160–255 and 260–352; these read VVFP…FCFT and GRFY…YCFR.

Belongs to the HAPLN family.

It is found in the secreted. The protein localises to the extracellular space. Its subcellular location is the extracellular matrix. In terms of biological role, stabilizes the aggregates of proteoglycan monomers with hyaluronic acid in the extracellular cartilage matrix. The protein is Hyaluronan and proteoglycan link protein 1 (HAPLN1) of Gallus gallus (Chicken).